We begin with the raw amino-acid sequence, 426 residues long: MLDIKQIRENPQLIQERLNSRNGTYDIQPILQLDKQQRELEATRSQIQARSNEIGKIVGQKIKSGINPQDPEIQALRDEGNAIKAQLSELEPREKELKAEIEQLILALPNLPSDSTPIGKGEEENVEVRLWGDEYLPQNPNIIPHWEIGEKLGILNFERAVKVAQSRFVNLIGAGAALERALINFMLKMQTAAGYIEVSPPLLVNTDSLTGTGQLPKFAEESFKCADDELWLIPTAEVPVTNLYRGEILAAENLPIYHCAYTPCFRREAGSYGRDMRGLIRLHQFNKVELVKVVHPSTSFDELEKLVGNAEAILQALKLPYRVINLCTGDLGFGATKTYDLEVWLPSSGKYREISSCSNCFDFQARRADIRFKEAGKKGTQFVHTLNGSGLAVGRTMAAILENYQQPDGTILIPEVLQPFLGREVL.

An L-serine-binding site is contributed by Thr235–Glu237. Arg266–Glu268 is a binding site for ATP. Glu289 provides a ligand contact to L-serine. ATP is bound at residue Glu353 to Ser356. Residue Ser389 coordinates L-serine.

It belongs to the class-II aminoacyl-tRNA synthetase family. Type-1 seryl-tRNA synthetase subfamily. In terms of assembly, homodimer. The tRNA molecule binds across the dimer.

The protein localises to the cytoplasm. It catalyses the reaction tRNA(Ser) + L-serine + ATP = L-seryl-tRNA(Ser) + AMP + diphosphate + H(+). The catalysed reaction is tRNA(Sec) + L-serine + ATP = L-seryl-tRNA(Sec) + AMP + diphosphate + H(+). It participates in aminoacyl-tRNA biosynthesis; selenocysteinyl-tRNA(Sec) biosynthesis; L-seryl-tRNA(Sec) from L-serine and tRNA(Sec): step 1/1. Catalyzes the attachment of serine to tRNA(Ser). Is also able to aminoacylate tRNA(Sec) with serine, to form the misacylated tRNA L-seryl-tRNA(Sec), which will be further converted into selenocysteinyl-tRNA(Sec). The chain is Serine--tRNA ligase from Nostoc sp. (strain PCC 7120 / SAG 25.82 / UTEX 2576).